The following is a 436-amino-acid chain: UDP-N-acetylglucosamine 1-carboxyvinyltransferase (436 aa).

Residue 22 to 23 coordinates phosphoenolpyruvate; that stretch reads KN. Arg96 contacts UDP-N-acetyl-alpha-D-glucosamine. Residue Cys120 is the Proton donor of the active site. A 2-(S-cysteinyl)pyruvic acid O-phosphothioketal modification is found at Cys120. Residues 125–129, Asp309, and Ile331 each bind UDP-N-acetyl-alpha-D-glucosamine; that span reads RPIDL.

The protein belongs to the EPSP synthase family. MurA subfamily.

The protein resides in the cytoplasm. It carries out the reaction phosphoenolpyruvate + UDP-N-acetyl-alpha-D-glucosamine = UDP-N-acetyl-3-O-(1-carboxyvinyl)-alpha-D-glucosamine + phosphate. The protein operates within cell wall biogenesis; peptidoglycan biosynthesis. Its function is as follows. Cell wall formation. Adds enolpyruvyl to UDP-N-acetylglucosamine. The sequence is that of UDP-N-acetylglucosamine 1-carboxyvinyltransferase from Acidobacterium capsulatum (strain ATCC 51196 / DSM 11244 / BCRC 80197 / JCM 7670 / NBRC 15755 / NCIMB 13165 / 161).